A 408-amino-acid polypeptide reads, in one-letter code: MGHATSLSHFLILSSSRFSRLGSLTRLLSKPTSLSGSFSSISVTGQGFRCCCSVATDDTSPSVKKRVVSGVQPTGSVHLGNYLGAIKNWVALQDTYETLFIIVDHHAITLPYDTRQLGKATTDTAALYLACGIDVSKASVFVQSHVPAHVELMWLLCSSTPIGWLQKMIQFKEKSRKEGVENASVGLFTYPDLMTADILLYQSDFVPVGEDQKQHIELAREIAQRVNHLYGGKKWKKLGGRGGSLFKIPEPLIPQAGARVMSLTDGLSKMSKSAPSDQSRINLLDSKDLIVDKIKRCKTDSFAGLEFDNAERPECNNLLSIYQIVSGKKKEEVMEECKDMSWGTFKPLLADALIEHLSPIQARYQEIIAEPEYLDKILSEGADRAEELGAVTMRNMYQAMGYYQRRRY.

A chloroplast and mitochondrion-targeting transit peptide spans 1-52; the sequence is MGHATSLSHFLILSSSRFSRLGSLTRLLSKPTSLSGSFSSISVTGQGFRCCC. At serine 53 the chain carries N-acetylserine. ATP-binding positions include glutamine 72 and 78 to 81; that span reads HLGN. Positions 73–81 match the 'HIGH' region motif; that stretch reads PTGSVHLGN. Aspartate 197 is an L-tryptophan binding site. ATP is bound by residues 209 to 211, valine 260, 269 to 273, and lysine 272; these read GED and KMSKS. The 'KMSKS' region signature appears at 269-273; that stretch reads KMSKS.

The protein belongs to the class-I aminoacyl-tRNA synthetase family.

It is found in the plastid. It localises to the chloroplast. The protein resides in the mitochondrion. The enzyme catalyses tRNA(Trp) + L-tryptophan + ATP = L-tryptophyl-tRNA(Trp) + AMP + diphosphate + H(+). The sequence is that of Tryptophan--tRNA ligase, chloroplastic/mitochondrial from Arabidopsis thaliana (Mouse-ear cress).